The chain runs to 276 residues: MANFTVADVKRLRALTGAGMLDCKSVLVETDGNFDKAVESLRIKGAKDVGKRAERATAEGLVAAKDGALIELNCETDFVAKNAEFQKLANQIVGVVAAAKIVDVDALKGASVGDKTVEQAIAELAAKIGEKLKLRRAAIFNGTVATYLHKRAADLPPAVGVLVEYGAGTDAANSTAAAHAAALQIAALKARFLSRDDVPEDVLASERRIAEETAKAAGKPEQSLPKIVEGRLNGFFKDSVLLEQPSVFDNKKTVKVLLDEAGVTVTRFVRFEVGQA.

The interval 76–79 (TDFV) is involved in Mg(2+) ion dislocation from EF-Tu.

This sequence belongs to the EF-Ts family.

It localises to the cytoplasm. Functionally, associates with the EF-Tu.GDP complex and induces the exchange of GDP to GTP. It remains bound to the aminoacyl-tRNA.EF-Tu.GTP complex up to the GTP hydrolysis stage on the ribosome. This chain is Elongation factor Ts, found in Mycobacterium leprae (strain Br4923).